The sequence spans 132 residues: Large ribosomal subunit protein uL14 (132 aa).

This sequence belongs to the universal ribosomal protein uL14 family. As to quaternary structure, part of the 50S ribosomal subunit. Forms a cluster with proteins L3 and L24e, part of which may contact the 16S rRNA in 2 intersubunit bridges.

In terms of biological role, binds to 23S rRNA. Forms part of two intersubunit bridges in the 70S ribosome. The protein is Large ribosomal subunit protein uL14 of Methanospirillum hungatei JF-1 (strain ATCC 27890 / DSM 864 / NBRC 100397 / JF-1).